Consider the following 105-residue polypeptide: Nitrogen fixation nifHD1 region GlnB-like protein 1 (105 aa).

Belongs to the P(II) protein family.

Functionally, could be involved in the regulation of nitrogen fixation. The protein is Nitrogen fixation nifHD1 region GlnB-like protein 1 (glnBA) of Methanosarcina barkeri.